The following is an 85-amino-acid chain: Homeobox protein knotted-1-like 7 (85 aa).

One can recognise an ELK domain in the interval 1-21 (ELKNELKQGYKEKLVDIREEI). Positions 22–85 (MRKRRAGKLP…NQRKRNWHSN (64 aa)) form a DNA-binding region, homeobox; TALE-type.

It belongs to the TALE/KNOX homeobox family. Expressed in all tissues examined. Highest expression in leaves.

The protein resides in the nucleus. The chain is Homeobox protein knotted-1-like 7 (KNOX7) from Zea mays (Maize).